A 136-amino-acid chain; its full sequence is Keratin-associated protein 15-1 (136 aa).

Belongs to the PMG family. In terms of assembly, interacts with hair keratins.

In terms of biological role, in the hair cortex, hair keratin intermediate filaments are embedded in an interfilamentous matrix, consisting of hair keratin-associated proteins (KRTAP), which are essential for the formation of a rigid and resistant hair shaft through their extensive disulfide bond cross-linking with abundant cysteine residues of hair keratins. The matrix proteins include the high-sulfur and high-glycine-tyrosine keratins. This is Keratin-associated protein 15-1 (KRTAP15-1) from Capra hircus (Goat).